Consider the following 546-residue polypeptide: Capsid protein VP1 (546 aa).

The disordered stretch occupies residues 1 to 38 (MMMASKDAPQSADGASGAGQLVPEVNTADPLPMEPVAG). The tract at residues 1–226 (MMMASKDAPQ…FLFLVPPTIE (226 aa)) is shell domain. Residues 227-279 (QKTRAFTVPNIPLQTLSNSRFPSLIQGMILSPDASQVVQFQNGRCLIDGQLLG) form a P1 sub-domain 1 region. The interval 227 to 545 (QKTRAFTVPN…TARGRLGVRR (319 aa)) is protruding domain. The P2 sub-domain stretch occupies residues 280–416 (TTPATSGQLF…GSSLSQAANL (137 aa)). A P1 sub-domain 2 region spans residues 417-546 (APPVFPPGFG…ARGRLGVRRI (130 aa)). The plays a role in binding to host histo-blood group structures antigens and in the formation of P-particles stretch occupies residues 538–545 (RGRLGVRR).

Belongs to the caliciviridae capsid protein family. As to quaternary structure, homodimer. Homomultimer. Interacts with the minor capsid protein VP2. Interacts (via C-terminus) with host type I histo-blood group structures antigens at the surface of target cells. In terms of processing, may be cleaved by host protease to generate soluble capsid protein. Assembled capsid cannot be cleaved.

The protein localises to the virion. It localises to the host cytoplasm. Capsid protein self assembles to form an icosahedral capsid with a T=3 symmetry, about 38 nm in diameter, and consisting of 180 capsid proteins. A smaller form of capsid with a diameter of 23 nm might be capsid proteins assembled as icosahedron with T=1 symmetry. The capsid encapsulates the genomic RNA and is decorated with VP2 proteins. Attaches virion to target cells by binding histo-blood group antigens (HBGAs) present on gastroduodenal epithelial cells. Functionally, the soluble capsid protein may play a role in viral immunoevasion. The polypeptide is Capsid protein VP1 (Southampton virus (strain GI/Human/United Kingdom/Southampton/1991) (SHV)).